A 253-amino-acid polypeptide reads, in one-letter code: MGLGRGQSPLLMALLLLLACLQMGMSLERISYVPQLSSATLAGRLTQSTFTLEQPRGQFSHPSISDSDAIWLVVAHSNATQKFTAPQKVEDTPVPADFPQRGYYLTLRASRALYPGGPPSNQLRVLRVGNDTRCSPRTRGCNRPLPGPGPYRVKFLVMSDRGPMAETEWSSETRLQQAEVLQAAPGPQTAGTVVIIAILSVLLAVLLAALLALLIFTWYDTCGSTPISGPGELVFVRKYDTHHMSRPSTVGGS.

The N-terminal stretch at 1-26 (MGLGRGQSPLLMALLLLLACLQMGMS) is a signal peptide. Over 27–194 (LERISYVPQL…PGPQTAGTVV (168 aa)) the chain is Extracellular. Asn78 and Asn130 each carry an N-linked (GlcNAc...) asparagine glycan. A helical transmembrane segment spans residues 195–215 (IIAILSVLLAVLLAALLALLI). Residues 216 to 253 (FTWYDTCGSTPISGPGELVFVRKYDTHHMSRPSTVGGS) lie on the Cytoplasmic side of the membrane.

Belongs to the uroplakin-3 family.

It is found in the membrane. The chain is Uroplakin-3b-like protein 1 from Bos taurus (Bovine).